Here is a 203-residue protein sequence, read N- to C-terminus: Dephospho-CoA kinase (203 aa).

Positions 3–202 (KIGLTGSIGM…MRIAKGDFRN (200 aa)) constitute a DPCK domain. 11–16 (GMGKST) lines the ATP pocket.

This sequence belongs to the CoaE family.

The protein resides in the cytoplasm. It carries out the reaction 3'-dephospho-CoA + ATP = ADP + CoA + H(+). It functions in the pathway cofactor biosynthesis; coenzyme A biosynthesis; CoA from (R)-pantothenate: step 5/5. Its function is as follows. Catalyzes the phosphorylation of the 3'-hydroxyl group of dephosphocoenzyme A to form coenzyme A. The sequence is that of Dephospho-CoA kinase from Rhizobium etli (strain ATCC 51251 / DSM 11541 / JCM 21823 / NBRC 15573 / CFN 42).